Reading from the N-terminus, the 109-residue chain is Nucleoid-associated protein BUsg_467 (109 aa).

The protein belongs to the YbaB/EbfC family. As to quaternary structure, homodimer.

The protein localises to the cytoplasm. It is found in the nucleoid. Binds to DNA and alters its conformation. May be involved in regulation of gene expression, nucleoid organization and DNA protection. This Buchnera aphidicola subsp. Schizaphis graminum (strain Sg) protein is Nucleoid-associated protein BUsg_467.